The following is a 330-amino-acid chain: GMP reductase (330 aa).

Residue C180 is the Thioimidate intermediate of the active site. NADP(+) is bound at residue 209 to 232 (LIADGGIRHNGDIAKSVRFGASMV).

The protein belongs to the IMPDH/GMPR family. GuaC type 2 subfamily.

It catalyses the reaction IMP + NH4(+) + NADP(+) = GMP + NADPH + 2 H(+). In terms of biological role, catalyzes the irreversible NADPH-dependent deamination of GMP to IMP. It functions in the conversion of nucleobase, nucleoside and nucleotide derivatives of G to A nucleotides, and in maintaining the intracellular balance of A and G nucleotides. In Lactobacillus acidophilus (strain ATCC 700396 / NCK56 / N2 / NCFM), this protein is GMP reductase.